The chain runs to 255 residues: Thiazole synthase (255 aa).

Residue Lys95 is the Schiff-base intermediate with DXP of the active site. Residues Gly156, 182–183, and 204–205 contribute to the 1-deoxy-D-xylulose 5-phosphate site; these read AG and NT.

Belongs to the ThiG family. As to quaternary structure, homotetramer. Forms heterodimers with either ThiH or ThiS.

It localises to the cytoplasm. The enzyme catalyses [ThiS sulfur-carrier protein]-C-terminal-Gly-aminoethanethioate + 2-iminoacetate + 1-deoxy-D-xylulose 5-phosphate = [ThiS sulfur-carrier protein]-C-terminal Gly-Gly + 2-[(2R,5Z)-2-carboxy-4-methylthiazol-5(2H)-ylidene]ethyl phosphate + 2 H2O + H(+). The protein operates within cofactor biosynthesis; thiamine diphosphate biosynthesis. Catalyzes the rearrangement of 1-deoxy-D-xylulose 5-phosphate (DXP) to produce the thiazole phosphate moiety of thiamine. Sulfur is provided by the thiocarboxylate moiety of the carrier protein ThiS. In vitro, sulfur can be provided by H(2)S. This chain is Thiazole synthase, found in Vibrio campbellii (strain ATCC BAA-1116).